An 87-amino-acid chain; its full sequence is AEMRNFALRDAQGNEIGVFTGKSPRQAALKAANRGYTEIKLRERGTKKVHIFSGERVQVDKPAGAPAWMPDKIWKPKVKKEGIEKLD.

Protects DNA against thermal denaturation and modulates transcription. This chain is Chromosomal protein MC1b, found in Methanothrix soehngenii (Methanosaeta concilii).